Here is a 421-residue protein sequence, read N- to C-terminus: Imidazolonepropionase (421 aa).

Fe(3+) contacts are provided by histidine 81 and histidine 83. Residues histidine 81 and histidine 83 each coordinate Zn(2+). 4-imidazolone-5-propanoate contacts are provided by arginine 90, tyrosine 153, and histidine 186. Tyrosine 153 is an N-formimidoyl-L-glutamate binding site. Position 251 (histidine 251) interacts with Fe(3+). Zn(2+) is bound at residue histidine 251. Glutamate 254 is a 4-imidazolone-5-propanoate binding site. Aspartate 326 provides a ligand contact to Fe(3+). A Zn(2+)-binding site is contributed by aspartate 326. Positions 328 and 330 each coordinate N-formimidoyl-L-glutamate. Residue serine 331 coordinates 4-imidazolone-5-propanoate.

It belongs to the metallo-dependent hydrolases superfamily. HutI family. Requires Zn(2+) as cofactor. The cofactor is Fe(3+).

Its subcellular location is the cytoplasm. It carries out the reaction 4-imidazolone-5-propanoate + H2O = N-formimidoyl-L-glutamate. It functions in the pathway amino-acid degradation; L-histidine degradation into L-glutamate; N-formimidoyl-L-glutamate from L-histidine: step 3/3. Functionally, catalyzes the hydrolytic cleavage of the carbon-nitrogen bond in imidazolone-5-propanoate to yield N-formimidoyl-L-glutamate. It is the third step in the universal histidine degradation pathway. This chain is Imidazolonepropionase, found in Streptococcus pyogenes serotype M3 (strain SSI-1).